A 471-amino-acid chain; its full sequence is 5-hydroxytryptamine receptor 2A (471 aa).

Topologically, residues 1 to 80 are extracellular; the sequence is MEILCEDNTS…LQEKNWSALL (80 aa). 5 N-linked (GlcNAc...) asparagine glycosylation sites follow: Asn8, Asn38, Asn44, Asn51, and Asn54. A helical transmembrane segment spans residues 81–97; it reads TAVVIILTIAGNILVIM. The Cytoplasmic segment spans residues 98–111; the sequence is AVSLEKKLQNATNY. Residues 112 to 137 form a helical membrane-spanning segment; it reads FLMSLAIADMLLGFLVMPVSMLTILY. The Extracellular segment spans residues 138-146; the sequence is GYRWPLPSK. Residues 147 to 171 form a helical membrane-spanning segment; it reads LCAVWIYLDVLFSTASIMHLCAISL. A disulfide bridge connects residues Cys148 and Cys227. Asp155 contributes to the serotonin binding site. Positions 172-174 match the DRY motif; important for ligand-induced conformation changes motif; it reads DRY. The Cytoplasmic segment spans residues 172-191; the sequence is DRYVAIQNPIHHSRFNSRTK. The chain crosses the membrane as a helical span at residues 192-215; sequence AFLKIIAVWTISVGVSMPIPVFGL. The Extracellular portion of the chain corresponds to 216 to 232; the sequence is QDDSKVFKQGSCLLADD. A helical transmembrane segment spans residues 233-258; that stretch reads NFVLIGSFVAFFIPLTIMVITYFLTI. Residues 259–322 are Cytoplasmic-facing; that stretch reads KSLQKEATLC…QSISNEQKAC (64 aa). Ser280 is modified (phosphoserine). The chain crosses the membrane as a helical span at residues 323–348; it reads KVLGIVFFLFVVMWCPFFITNIMAVI. Residue Asn343 coordinates serotonin. Cys349 and Cys353 are oxidised to a cystine. At 349–356 the chain is on the extracellular side; sequence CKESCNEH. A helical membrane pass occupies residues 357-382; the sequence is VIGALLNVFVWIGYLSSAVNPLVYTL. Positions 376–380 match the NPxxY motif; important for ligand-induced conformation changes and signaling motif; the sequence is NPLVY. Residues 383–471 are Cytoplasmic-facing; it reads FNKTYRSAFS…NTVNEKVSCV (89 aa). The PDZ-binding motif lies at 469 to 471; the sequence is SCV.

The protein belongs to the G-protein coupled receptor 1 family. In terms of assembly, interacts (via C-terminus) with MPDZ and PATJ. May interact (via C-terminus) with MPP3, PRDX6, DLG4, DLG1, CASK, APBA1 and MAGI2. Interacts with GRM2 and DRD2; this may affect signaling.

It localises to the cell membrane. The protein resides in the cell projection. The protein localises to the dendrite. It is found in the axon. Its subcellular location is the cytoplasmic vesicle. It localises to the membrane. The protein resides in the caveola. The protein localises to the presynapse. With respect to regulation, G-protein coupled receptor activity is regulated by lipids: oleamide increases HTR2A-mediated activity. Its function is as follows. G-protein coupled receptor for 5-hydroxytryptamine (serotonin). Also functions as a receptor for various drugs and psychoactive substances, including mescaline, psilocybin, 1-(2,5-dimethoxy-4-iodophenyl)-2-aminopropane (DOI) and lysergic acid diethylamide (LSD). Ligand binding causes a conformation change that triggers signaling via guanine nucleotide-binding proteins (G proteins) and modulates the activity of downstream effectors. HTR2A is coupled to G(q)/G(11) G alpha proteins and activates phospholipase C-beta, releasing diacylglycerol (DAG) and inositol 1,4,5-trisphosphate (IP3) second messengers that modulate the activity of phosphatidylinositol 3-kinase and promote the release of Ca(2+) ions from intracellular stores, respectively. Beta-arrestin family members inhibit signaling via G proteins and mediate activation of alternative signaling pathways. Affects neural activity, perception, cognition and mood. Plays a role in the regulation of behavior, including responses to anxiogenic situations and psychoactive substances. Plays a role in intestinal smooth muscle contraction, and may play a role in arterial vasoconstriction. The protein is 5-hydroxytryptamine receptor 2A (HTR2A) of Cricetulus griseus (Chinese hamster).